Reading from the N-terminus, the 502-residue chain is Probable cytosol aminopeptidase (502 aa).

The Mn(2+) site is built by K267 and D272. The active site involves K279. The Mn(2+) site is built by D290, D349, and E351. R353 is an active-site residue.

It belongs to the peptidase M17 family. Mn(2+) is required as a cofactor.

The protein localises to the cytoplasm. It catalyses the reaction Release of an N-terminal amino acid, Xaa-|-Yaa-, in which Xaa is preferably Leu, but may be other amino acids including Pro although not Arg or Lys, and Yaa may be Pro. Amino acid amides and methyl esters are also readily hydrolyzed, but rates on arylamides are exceedingly low.. It carries out the reaction Release of an N-terminal amino acid, preferentially leucine, but not glutamic or aspartic acids.. In terms of biological role, presumably involved in the processing and regular turnover of intracellular proteins. Catalyzes the removal of unsubstituted N-terminal amino acids from various peptides. The polypeptide is Probable cytosol aminopeptidase (Aeromonas salmonicida (strain A449)).